The primary structure comprises 304 residues: Porphobilinogen deaminase (304 aa).

The residue at position 239 (Cys239) is an S-(dipyrrolylmethanemethyl)cysteine.

The protein belongs to the HMBS family. Monomer. The cofactor is dipyrromethane.

The catalysed reaction is 4 porphobilinogen + H2O = hydroxymethylbilane + 4 NH4(+). The protein operates within porphyrin-containing compound metabolism; protoporphyrin-IX biosynthesis; coproporphyrinogen-III from 5-aminolevulinate: step 2/4. In terms of biological role, tetrapolymerization of the monopyrrole PBG into the hydroxymethylbilane pre-uroporphyrinogen in several discrete steps. In Brucella ovis (strain ATCC 25840 / 63/290 / NCTC 10512), this protein is Porphobilinogen deaminase.